Reading from the N-terminus, the 874-residue chain is Alanine--tRNA ligase (874 aa).

Zn(2+) is bound by residues histidine 564, histidine 568, cysteine 665, and histidine 669.

This sequence belongs to the class-II aminoacyl-tRNA synthetase family. It depends on Zn(2+) as a cofactor.

It localises to the cytoplasm. The catalysed reaction is tRNA(Ala) + L-alanine + ATP = L-alanyl-tRNA(Ala) + AMP + diphosphate. Functionally, catalyzes the attachment of alanine to tRNA(Ala) in a two-step reaction: alanine is first activated by ATP to form Ala-AMP and then transferred to the acceptor end of tRNA(Ala). Also edits incorrectly charged Ser-tRNA(Ala) and Gly-tRNA(Ala) via its editing domain. The protein is Alanine--tRNA ligase of Burkholderia cenocepacia (strain HI2424).